The chain runs to 459 residues: Alcohol acyl transferase 2 (459 aa).

Residues His164 and Asn385 each act as proton acceptor in the active site.

It belongs to the plant acyltransferase family. In terms of tissue distribution, highly expressed in the cortex and skin of ripe fruit.

In terms of biological role, involved in the biosynthesis of volatile esters which confer ripe apple fruit flavor. Alcohol acyl transferase that can use a wide range of alcohols as substrate to produce esters. The chain is Alcohol acyl transferase 2 from Malus domestica (Apple).